A 219-amino-acid chain; its full sequence is Small ribosomal subunit protein uS3c (219 aa).

The region spanning I39–E118 is the KH type-2 domain.

This sequence belongs to the universal ribosomal protein uS3 family. In terms of assembly, part of the 30S ribosomal subunit.

It is found in the plastid. This Cuscuta obtusiflora (Peruvian dodder) protein is Small ribosomal subunit protein uS3c (rps3).